The following is a 166-amino-acid chain: UPF0336 protein MT0525.1 (166 aa).

The region spanning glutamine 8–threonine 131 is the MaoC-like domain.

The protein belongs to the UPF0336 family.

This chain is UPF0336 protein MT0525.1, found in Mycobacterium tuberculosis (strain CDC 1551 / Oshkosh).